Reading from the N-terminus, the 365-residue chain is Aspartate-semialdehyde dehydrogenase (365 aa).

Positions 12, 13, 14, 15, 37, 40, 85, and 86 each coordinate NADP(+). C156 serves as the catalytic Acyl-thioester intermediate. G188 lines the NADP(+) pocket. Residue H256 is the Proton acceptor of the active site. NADP(+) is bound at residue N343.

This sequence belongs to the aspartate-semialdehyde dehydrogenase family. Homotetramer; dimer of dimers.

It localises to the cytoplasm. Its subcellular location is the cytosol. It is found in the nucleus. It catalyses the reaction L-aspartate 4-semialdehyde + phosphate + NADP(+) = 4-phospho-L-aspartate + NADPH + H(+). The protein operates within amino-acid biosynthesis; L-methionine biosynthesis via de novo pathway; L-homoserine from L-aspartate: step 2/3. It participates in amino-acid biosynthesis; L-threonine biosynthesis; L-threonine from L-aspartate: step 2/5. Its activity is regulated as follows. Inhibited by the non-competitive inhibitors phthalaldehyde and naphthalene, the competitive inhibitor 1,4-benzoquinone and derivates such as 2-chloro-3-methoxy-1,4-naphthoquinone, 2,3-dichloro-1,4-naphthoquinone, 2-chloro-1,4-naphthoquinone, 2-bromo-1,4-naphthoquinone and 2,3-dichloro-5,8-dihydroxy-1,4-naphthoquinone, and 5-aminoisoquinoline. Inhibited by vinyl sulfones. Functionally, catalyzes the NADPH-dependent formation of L-aspartate 4-semialdehyde (L-ASA) by the reductive dephosphorylation of 4-phospho-L-aspartate. Mediates the second step in the biosynthesis of amino acids that derive from aspartate (the aspartate family of amino acids), including methioinine and threonine, the latter of which is a precursor to isoleucine. The protein is Aspartate-semialdehyde dehydrogenase of Candida albicans (strain SC5314 / ATCC MYA-2876) (Yeast).